The chain runs to 218 residues: Thiopurine S-methyltransferase (218 aa).

Positions 10, 45, 66, and 123 each coordinate S-adenosyl-L-methionine.

This sequence belongs to the class I-like SAM-binding methyltransferase superfamily. TPMT family.

The protein localises to the cytoplasm. The catalysed reaction is S-adenosyl-L-methionine + a thiopurine = S-adenosyl-L-homocysteine + a thiopurine S-methylether.. The polypeptide is Thiopurine S-methyltransferase (Shewanella sp. (strain ANA-3)).